Here is a 131-residue protein sequence, read N- to C-terminus: L-ectoine synthase (131 aa).

This sequence belongs to the ectoine synthase family.

It carries out the reaction (2S)-4-acetamido-2-aminobutanoate = L-ectoine + H2O. It participates in amine and polyamine biosynthesis; ectoine biosynthesis; L-ectoine from L-aspartate 4-semialdehyde: step 3/3. Functionally, catalyzes the circularization of gamma-N-acetyl-alpha,gamma-diaminobutyric acid (ADABA) to ectoine (1,4,5,6-tetrahydro-2-methyl-4-pyrimidine carboxylic acid), which is an excellent osmoprotectant. The chain is L-ectoine synthase from Nocardia farcinica (strain IFM 10152).